The primary structure comprises 842 residues: Leucine--tRNA ligase (842 aa).

The short motif at 44 to 55 (PYPSANGLHVGH) is the 'HIGH' region element. Residues 619–623 (KMSKS) carry the 'KMSKS' region motif. Position 622 (lysine 622) interacts with ATP.

Belongs to the class-I aminoacyl-tRNA synthetase family.

The protein resides in the cytoplasm. It carries out the reaction tRNA(Leu) + L-leucine + ATP = L-leucyl-tRNA(Leu) + AMP + diphosphate. The sequence is that of Leucine--tRNA ligase from Borrelia duttonii (strain Ly).